Reading from the N-terminus, the 680-residue chain is Chondroitin proteoglycan 4 (680 aa).

Residues 1 to 18 form the signal peptide; it reads MLRVNLLILLCFVPFSLN. Residues asparagine 42, asparagine 59, asparagine 72, asparagine 167, asparagine 205, asparagine 458, asparagine 472, asparagine 486, asparagine 498, asparagine 526, asparagine 527, asparagine 556, and asparagine 604 are each glycosylated (N-linked (GlcNAc...) asparagine). Residues 460–680 form a disordered region; it reads TKKAETTKKS…PLTTTLHELY (221 aa). The span at 484–500 shows a compositional bias: low complexity; sequence AANTTAETTKTTSANIT. Over residues 520-530 the composition is skewed to polar residues; sequence SLDTSGNNSTV. 2 stretches are compositionally biased toward low complexity: residues 633 to 647 and 654 to 669; these read GEAS…SGEV and SGYS…SSGE. O-linked (Xyl...) (chondroitin sulfate) serine glycans are attached at residues serine 640 and serine 644. Asparagine 664 carries N-linked (GlcNAc...) asparagine glycosylation.

The protein is Chondroitin proteoglycan 4 (cpg-4) of Caenorhabditis briggsae.